The following is a 264-amino-acid chain: Thiazole synthase (264 aa).

Lys-106 acts as the Schiff-base intermediate with DXP in catalysis. Residues Gly-167, 193 to 194, and 215 to 216 each bind 1-deoxy-D-xylulose 5-phosphate; these read AG and NS.

Belongs to the ThiG family. Homotetramer. Forms heterodimers with either ThiH or ThiS.

Its subcellular location is the cytoplasm. It catalyses the reaction [ThiS sulfur-carrier protein]-C-terminal-Gly-aminoethanethioate + 2-iminoacetate + 1-deoxy-D-xylulose 5-phosphate = [ThiS sulfur-carrier protein]-C-terminal Gly-Gly + 2-[(2R,5Z)-2-carboxy-4-methylthiazol-5(2H)-ylidene]ethyl phosphate + 2 H2O + H(+). It participates in cofactor biosynthesis; thiamine diphosphate biosynthesis. Catalyzes the rearrangement of 1-deoxy-D-xylulose 5-phosphate (DXP) to produce the thiazole phosphate moiety of thiamine. Sulfur is provided by the thiocarboxylate moiety of the carrier protein ThiS. In vitro, sulfur can be provided by H(2)S. In Pseudomonas fluorescens (strain Pf0-1), this protein is Thiazole synthase.